We begin with the raw amino-acid sequence, 117 residues long: Appetite-regulating hormone (117 aa).

The signal sequence occupies residues 1–23; it reads MPSLGTMCSLLLFSVLWVDLAMA. A lipid anchor (O-decanoyl serine; alternate) is attached at Ser26. Ser26 is lipidated: O-hexanoyl serine; alternate. Ser26 carries O-octanoyl serine; alternate lipidation. Residues 30-68 form a disordered region; sequence PEHQKLQQRKESKKPPAKLQPRALEGSLGPEDTSQVEEA. Basic and acidic residues predominate over residues 31 to 43; sequence EHQKLQQRKESKK. The propeptide at 52–75 is removed in mature form; the sequence is ALEGSLGPEDTSQVEEAEDELEIR. The residue at position 98 (Leu98) is a Leucine amide. Positions 99 to 117 are cleaved as a propeptide — removed in mature form; that stretch reads GKFLQEVLWEDTNEALADE.

Belongs to the motilin family. O-octanoylated by GOAT/MBOAT4. O-octanoylation is essential for ghrelin activity. Post-translationally, amidation of Leu-98 is essential for obestatin activity.

The protein resides in the secreted. Functionally, ghrelin is the ligand for growth hormone secretagogue receptor type 1 (GHSR). Induces the release of growth hormone from the pituitary. Has an appetite-stimulating effect, induces adiposity and stimulates gastric acid secretion. Involved in growth regulation. Its function is as follows. Obestatin may be the ligand for GPR39. May have an appetite-reducing effect resulting in decreased food intake. May reduce gastric emptying activity and jejunal motility. The protein is Appetite-regulating hormone (GHRL) of Canis lupus familiaris (Dog).